The following is a 208-amino-acid chain: MPGRFITLEGGEGVGKSTQAKALAAALRARGLDVVETREPGGSDGAEAIRRLLLEGAADRWNARAEALLFAAARADHVARTIRPAIEAGRWVVCDRFLDSSIAYQGGADGLGDEAIRTLHAIGSAGYLPDRTLLLDMPVFDAAFRQAEAGIANSDRFEKRDEAFHDRVADSFRRIAAQEPARIRTINAQGSPQEVTARLIEALADLLP.

10–17 (GGEGVGKS) lines the ATP pocket.

It belongs to the thymidylate kinase family.

The enzyme catalyses dTMP + ATP = dTDP + ADP. Phosphorylation of dTMP to form dTDP in both de novo and salvage pathways of dTTP synthesis. The polypeptide is Thymidylate kinase (Rhizorhabdus wittichii (strain DSM 6014 / CCUG 31198 / JCM 15750 / NBRC 105917 / EY 4224 / RW1) (Sphingomonas wittichii)).